We begin with the raw amino-acid sequence, 650 residues long: Kinesin-like protein KIF22-B (650 aa).

The Kinesin motor domain occupies 31 to 359; it reads RVRVAVRLRP…LNFAAKSKQI (329 aa). 116–123 is a binding site for ATP; that stretch reads GPTGAGKT. Positions 365–416 are disordered; it reads SRETTQTVAQPAMKRPREEAEATTSSRQRKKSKTDSTESSPNSSMESTGKRK. The span at 401 to 411 shows a compositional bias: low complexity; sequence TESSPNSSMES. Residues 452–498 adopt a coiled-coil conformation; the sequence is KRERMALLKKWEESQMEIERLKEKQKELEQKAMEAEARLEKSNNSDL. Positions 560-563 match the Important for regulated proteolytic degradation motif; the sequence is GHEN.

Belongs to the TRAFAC class myosin-kinesin ATPase superfamily. Kinesin family. In terms of processing, ubiquitinated, leading to its subsequent proteasomal degradation.

The protein resides in the nucleus. The protein localises to the cytoplasm. Its subcellular location is the cytoskeleton. Functionally, kinesin family member that is involved in spindle formation and the movements of chromosomes during mitosis and meiosis. Binds to microtubules and to DNA. In Xenopus laevis (African clawed frog), this protein is Kinesin-like protein KIF22-B (kif22-b).